The sequence spans 163 residues: Transcription antitermination protein NusB (163 aa).

The interval 1–21 (MTTFLSDSEHPQDVKAPPKSA) is disordered.

The protein belongs to the NusB family.

Functionally, involved in transcription antitermination. Required for transcription of ribosomal RNA (rRNA) genes. Binds specifically to the boxA antiterminator sequence of the ribosomal RNA (rrn) operons. This is Transcription antitermination protein NusB from Dechloromonas aromatica (strain RCB).